We begin with the raw amino-acid sequence, 174 residues long: Ribulose bisphosphate carboxylase small subunit, chloroplastic 1 (174 aa).

The N-terminal 45 residues, 1-45, are a transit peptide targeting the chloroplast; sequence MAPAVMASSATTVAPFQGLKSTAGLPVSRRSRGSLGSVSNGGRIR.

This sequence belongs to the RuBisCO small chain family. In terms of assembly, heterohexadecamer of 8 large and 8 small subunits.

Its subcellular location is the plastid. It is found in the chloroplast. Its function is as follows. RuBisCO catalyzes two reactions: the carboxylation of D-ribulose 1,5-bisphosphate, the primary event in carbon dioxide fixation, as well as the oxidative fragmentation of the pentose substrate. Both reactions occur simultaneously and in competition at the same active site. Although the small subunit is not catalytic it is essential for maximal activity. The chain is Ribulose bisphosphate carboxylase small subunit, chloroplastic 1 from Triticum aestivum (Wheat).